The chain runs to 156 residues: ATP synthase subunit b 1 (156 aa).

Residues 7–27 form a helical membrane-spanning segment; the sequence is LFLQAIVFAILVWFTMKFVWP.

This sequence belongs to the ATPase B chain family. In terms of assembly, F-type ATPases have 2 components, F(1) - the catalytic core - and F(0) - the membrane proton channel. F(1) has five subunits: alpha(3), beta(3), gamma(1), delta(1), epsilon(1). F(0) has three main subunits: a(1), b(2) and c(10-14). The alpha and beta chains form an alternating ring which encloses part of the gamma chain. F(1) is attached to F(0) by a central stalk formed by the gamma and epsilon chains, while a peripheral stalk is formed by the delta and b chains.

The protein localises to the cell inner membrane. Its function is as follows. F(1)F(0) ATP synthase produces ATP from ADP in the presence of a proton or sodium gradient. F-type ATPases consist of two structural domains, F(1) containing the extramembraneous catalytic core and F(0) containing the membrane proton channel, linked together by a central stalk and a peripheral stalk. During catalysis, ATP synthesis in the catalytic domain of F(1) is coupled via a rotary mechanism of the central stalk subunits to proton translocation. Component of the F(0) channel, it forms part of the peripheral stalk, linking F(1) to F(0). The chain is ATP synthase subunit b 1 from Albidiferax ferrireducens (strain ATCC BAA-621 / DSM 15236 / T118) (Rhodoferax ferrireducens).